A 77-amino-acid chain; its full sequence is U8-lycotoxin-Ls1j (77 aa).

The signal sequence occupies residues 1-20 (MKLIIFTGLILFAIVSLIEA). Residues 21 to 26 (QANNEK) constitute a propeptide that is removed on maturation.

This sequence belongs to the neurotoxin 19 (CSTX) family. 08 (U8-Lctx) subfamily. Contains 4 disulfide bonds. In terms of tissue distribution, expressed by the venom gland.

It is found in the secreted. This is U8-lycotoxin-Ls1j from Lycosa singoriensis (Wolf spider).